The chain runs to 271 residues: Type II restriction enzyme ScrFI (271 aa).

It catalyses the reaction Endonucleolytic cleavage of DNA to give specific double-stranded fragments with terminal 5'-phosphates.. A P subtype restriction enzyme that recognizes the double-stranded sequence 5'-CCNGG-3' and cleaves after C-2. The polypeptide is Type II restriction enzyme ScrFI (Lactococcus lactis subsp. cremoris (Streptococcus cremoris)).